A 445-amino-acid chain; its full sequence is Chromosomal replication initiator protein DnaA (445 aa).

The tract at residues 1-73 (MSTHLTETWE…VNALKLLTSK (73 aa)) is domain I, interacts with DnaA modulators. Residues 73–106 (KKYNIDFIVTTEEKIEKNHNNEKSNIVVNDEMST) are domain II. Positions 107–323 (MLNPKYTFDS…GALIRIVAFS (217 aa)) are domain III, AAA+ region. Residues glycine 151, glycine 153, lysine 154, and threonine 155 each contribute to the ATP site. Positions 324–445 (SLTNKEISVD…NDLNKRINQK (122 aa)) are domain IV, binds dsDNA.

The protein belongs to the DnaA family. As to quaternary structure, oligomerizes as a right-handed, spiral filament on DNA at oriC.

The protein localises to the cytoplasm. Plays an essential role in the initiation and regulation of chromosomal replication. ATP-DnaA binds to the origin of replication (oriC) to initiate formation of the DNA replication initiation complex once per cell cycle. Binds the DnaA box (a 9 base pair repeat at the origin) and separates the double-stranded (ds)DNA. Forms a right-handed helical filament on oriC DNA; dsDNA binds to the exterior of the filament while single-stranded (ss)DNA is stabiized in the filament's interior. The ATP-DnaA-oriC complex binds and stabilizes one strand of the AT-rich DNA unwinding element (DUE), permitting loading of DNA polymerase. After initiation quickly degrades to an ADP-DnaA complex that is not apt for DNA replication. Binds acidic phospholipids. The chain is Chromosomal replication initiator protein DnaA from Clostridium botulinum (strain Loch Maree / Type A3).